The primary structure comprises 285 residues: Protease HtpX homolog (285 aa).

Helical transmembrane passes span 7 to 27 and 30 to 50; these read TAML…MIGG and GMTI…WFSD. H131 contacts Zn(2+). E132 is a catalytic residue. Zn(2+) is bound at residue H135. Transmembrane regions (helical) follow at residues 146–166 and 177–197; these read ISAT…FFGG and IAGI…QMAI. E202 is a binding site for Zn(2+).

The protein belongs to the peptidase M48B family. Zn(2+) serves as cofactor.

The protein resides in the cell inner membrane. The sequence is that of Protease HtpX homolog from Burkholderia thailandensis (strain ATCC 700388 / DSM 13276 / CCUG 48851 / CIP 106301 / E264).